We begin with the raw amino-acid sequence, 719 residues long: Transcription factor E4F1 (719 aa).

The segment at 20–63 is required for ubiquitin ligase activity; the sequence is NIITIQTTLGDEDEDIHKCGKCLAEFSALDAFIQHKLSRSCKRT. The segment at 59 to 125 is disordered; that stretch reads SCKRTQDPQT…SEDESSSPSK (67 aa). The span at 98–109 shows a compositional bias: basic and acidic residues; it reads EKQDAKVASGDK. The segment at 128–207 is mediates dimerization and DNA-binding; the sequence is WKLNTEGRYV…GLAFRESGAL (80 aa). 2 consecutive C2H2-type zinc fingers follow at residues 136–158 and 164–186; these read YVCD…MFTH and FVCE…KRRH. Residues 192 to 216 form a C2H2-type 3; degenerate zinc finger; that stretch reads YRCNQCGLAFRESGALTRHLKSLTP. 5 C2H2-type zinc fingers span residues 365 to 387, 393 to 415, 421 to 443, 449 to 471, and 477 to 499; these read YKCP…VKGH, FKCL…METH, YKCG…MRAH, YHCS…HRTH, and YVCQ…IRHH. The segment at 505–527 adopts a C2H2-type 9; degenerate zinc-finger fold; that stretch reads FKCSKCGRGFAEHGTLNRHLRAK.

Its subcellular location is the nucleus. The protein resides in the nucleoplasm. The protein localises to the cytoplasm. The catalysed reaction is S-ubiquitinyl-[E2 ubiquitin-conjugating enzyme]-L-cysteine + [acceptor protein]-L-lysine = [E2 ubiquitin-conjugating enzyme]-L-cysteine + N(6)-ubiquitinyl-[acceptor protein]-L-lysine.. It participates in protein modification; protein ubiquitination. In terms of biological role, may function as a transcriptional repressor. May also function as a ubiquitin ligase. Functions in cell survival and proliferation through control of the cell cycle. This is Transcription factor E4F1 (e4f1) from Danio rerio (Zebrafish).